The primary structure comprises 213 residues: Insulin-like peptide INSL6 (213 aa).

Residues 1-20 (MPRLLRLSLLWLGLLLVRFS) form the signal peptide. Disulfide bonds link Cys-33–Cys-179, Cys-45–Cys-192, and Cys-178–Cys-183. Positions 55 to 168 (FEEETPFSRL…SNLFWGHHPQ (114 aa)) are cleaved as a propeptide — connecting peptide. Residues 201 to 213 (LKEKRSSLVTKIY) constitute a propeptide that is removed on maturation.

Belongs to the insulin family. As to expression, testis specific.

It is found in the secreted. May have a role in sperm development and fertilization. This is Insulin-like peptide INSL6 (INSL6) from Homo sapiens (Human).